Here is a 92-residue protein sequence, read N- to C-terminus: Protein AC152 (92 aa).

Functionally, acts as a transactivator of AC102 and HE65 genes. Therefore, participates in the global recruitment of G-actin to the host nucleus. This chain is Protein AC152 (AC152), found in Autographa californica nuclear polyhedrosis virus (AcMNPV).